The primary structure comprises 228 residues: Ribose-5-phosphate isomerase A (228 aa).

Substrate contacts are provided by residues 27-30 (TGTT), 86-89 (DGAD), and 100-103 (KGMG). Glu109 acts as the Proton acceptor in catalysis. Residue Lys127 participates in substrate binding.

This sequence belongs to the ribose 5-phosphate isomerase family. In terms of assembly, homodimer.

The catalysed reaction is aldehydo-D-ribose 5-phosphate = D-ribulose 5-phosphate. It participates in carbohydrate degradation; pentose phosphate pathway; D-ribose 5-phosphate from D-ribulose 5-phosphate (non-oxidative stage): step 1/1. Its function is as follows. Catalyzes the reversible conversion of ribose-5-phosphate to ribulose 5-phosphate. This chain is Ribose-5-phosphate isomerase A, found in Borreliella burgdorferi (strain ZS7) (Borrelia burgdorferi).